We begin with the raw amino-acid sequence, 195 residues long: uncharacterized protein (195 aa).

The N-terminal stretch at 1–21 is a signal peptide; it reads MHFSSCVLVSALAIVTNVATA. 2 N-linked (GlcNAc...) asparagine glycosylation sites follow: Asn62 and Asn109. Residues 119–141 are disordered; the sequence is DWDEDTVTGENAPDSGEPFSTSH.

It localises to the secreted. This is an uncharacterized protein from Arthroderma benhamiae (strain ATCC MYA-4681 / CBS 112371) (Trichophyton mentagrophytes).